The following is a 338-amino-acid chain: Ketol-acid reductoisomerase (NADP(+)) (338 aa).

The region spanning 1-181 (MKVFYDKDCD…GGGRTGIIET (181 aa)) is the KARI N-terminal Rossmann domain. NADP(+) contacts are provided by residues 24–27 (YGSQ), arginine 47, serine 50, threonine 52, and 82–85 (DEFQ). Histidine 107 is an active-site residue. Glycine 133 serves as a coordination point for NADP(+). A KARI C-terminal knotted domain is found at 182 to 327 (TFKDETETDL…EQLRSMMPWI (146 aa)). 4 residues coordinate Mg(2+): aspartate 190, glutamate 194, glutamate 226, and glutamate 230. Serine 251 contacts substrate.

The protein belongs to the ketol-acid reductoisomerase family. Requires Mg(2+) as cofactor.

The catalysed reaction is (2R)-2,3-dihydroxy-3-methylbutanoate + NADP(+) = (2S)-2-acetolactate + NADPH + H(+). It carries out the reaction (2R,3R)-2,3-dihydroxy-3-methylpentanoate + NADP(+) = (S)-2-ethyl-2-hydroxy-3-oxobutanoate + NADPH + H(+). Its pathway is amino-acid biosynthesis; L-isoleucine biosynthesis; L-isoleucine from 2-oxobutanoate: step 2/4. The protein operates within amino-acid biosynthesis; L-valine biosynthesis; L-valine from pyruvate: step 2/4. In terms of biological role, involved in the biosynthesis of branched-chain amino acids (BCAA). Catalyzes an alkyl-migration followed by a ketol-acid reduction of (S)-2-acetolactate (S2AL) to yield (R)-2,3-dihydroxy-isovalerate. In the isomerase reaction, S2AL is rearranged via a Mg-dependent methyl migration to produce 3-hydroxy-3-methyl-2-ketobutyrate (HMKB). In the reductase reaction, this 2-ketoacid undergoes a metal-dependent reduction by NADPH to yield (R)-2,3-dihydroxy-isovalerate. The sequence is that of Ketol-acid reductoisomerase (NADP(+)) from Pseudomonas putida (strain W619).